The primary structure comprises 201 residues: Retinol-binding protein 4 (201 aa).

The signal sequence occupies residues 1–18; it reads MEWVWALVLLAALGSGRG. 3 cysteine pairs are disulfide-bonded: cysteine 22–cysteine 178, cysteine 88–cysteine 192, and cysteine 138–cysteine 147. Glutamine 116 serves as a coordination point for substrate. An Omega-N-methylarginine modification is found at arginine 139.

It belongs to the calycin superfamily. Lipocalin family. In terms of assembly, interacts with TTR. Interaction with TTR prevents its loss by filtration through the kidney glomeruli. Interacts with STRA6.

It localises to the secreted. Retinol-binding protein that mediates retinol transport in blood plasma. Delivers retinol from the liver stores to the peripheral tissues. Transfers the bound all-trans retinol to STRA6, that then facilitates retinol transport across the cell membrane. The polypeptide is Retinol-binding protein 4 (RBP4) (Oryctolagus cuniculus (Rabbit)).